We begin with the raw amino-acid sequence, 213 residues long: Thiamine-phosphate synthase (213 aa).

Residues 43–47 and Asn-74 each bind 4-amino-2-methyl-5-(diphosphooxymethyl)pyrimidine; that span reads QLRDK. Positions 75 and 94 each coordinate Mg(2+). Ser-113 is a binding site for 4-amino-2-methyl-5-(diphosphooxymethyl)pyrimidine. 142-144 is a binding site for 2-[(2R,5Z)-2-carboxy-4-methylthiazol-5(2H)-ylidene]ethyl phosphate; it reads TAT. Lys-145 serves as a coordination point for 4-amino-2-methyl-5-(diphosphooxymethyl)pyrimidine. 2-[(2R,5Z)-2-carboxy-4-methylthiazol-5(2H)-ylidene]ethyl phosphate is bound by residues Gly-173 and 193–194; that span reads VS.

This sequence belongs to the thiamine-phosphate synthase family. Mg(2+) serves as cofactor.

It catalyses the reaction 2-[(2R,5Z)-2-carboxy-4-methylthiazol-5(2H)-ylidene]ethyl phosphate + 4-amino-2-methyl-5-(diphosphooxymethyl)pyrimidine + 2 H(+) = thiamine phosphate + CO2 + diphosphate. The catalysed reaction is 2-(2-carboxy-4-methylthiazol-5-yl)ethyl phosphate + 4-amino-2-methyl-5-(diphosphooxymethyl)pyrimidine + 2 H(+) = thiamine phosphate + CO2 + diphosphate. It carries out the reaction 4-methyl-5-(2-phosphooxyethyl)-thiazole + 4-amino-2-methyl-5-(diphosphooxymethyl)pyrimidine + H(+) = thiamine phosphate + diphosphate. Its pathway is cofactor biosynthesis; thiamine diphosphate biosynthesis; thiamine phosphate from 4-amino-2-methyl-5-diphosphomethylpyrimidine and 4-methyl-5-(2-phosphoethyl)-thiazole: step 1/1. Its function is as follows. Condenses 4-methyl-5-(beta-hydroxyethyl)thiazole monophosphate (THZ-P) and 2-methyl-4-amino-5-hydroxymethyl pyrimidine pyrophosphate (HMP-PP) to form thiamine monophosphate (TMP). The chain is Thiamine-phosphate synthase from Psychrobacter sp. (strain PRwf-1).